The chain runs to 414 residues: uncharacterized protein (414 aa).

Residues 1 to 66 (MNPSVPKVMK…LQRISKDYLK (66 aa)) lie on the Lumenal side of the membrane. Positions 20–51 (SKEMNDTSLQLPSTTRSLSPKESNSNEDFNVD) are disordered. Over residues 25–51 (DTSLQLPSTTRSLSPKESNSNEDFNVD) the composition is skewed to polar residues. Residue lysine 40 forms a Glycyl lysine isopeptide (Lys-Gly) (interchain with G-Cter in ubiquitin) linkage. A helical membrane pass occupies residues 67 to 87 (PNIGLVLLTVSYFFNSAMVVS). Residues 78–215 (YFFNSAMVVS…SLLGVVLIVR (138 aa)) enclose the EamA 1 domain. Residues 88-106 (TKVLENDPDDIANDRQIKP) lie on the Cytoplasmic side of the membrane. The helical transmembrane segment at 107-127 (LQILLVRMVITYIGTLIYMYI) threads the bilayer. The Lumenal portion of the chain corresponds to 128–144 (NKSTISDVPFGKPEVRK). The chain crosses the membrane as a helical span at residues 145 to 167 (WLVLRGCTGFFGVFGMYYSLMYL). Topologically, residues 168 to 171 (TISD) are cytoplasmic. The chain crosses the membrane as a helical span at residues 172–191 (AVLITFLAPSLTIFLSWVIL). The Lumenal segment spans residues 192-199 (RERFTKVE). The helical transmembrane segment at 200 to 220 (ALGSLISLLGVVLIVRPSFLF) threads the bilayer. Residues 221 to 241 (GTPELTDSSSQIVESSDPKSR) lie on the Cytoplasmic side of the membrane. Residues 242–262 (LIATLVGLWGVLGMSCVYIII) traverse the membrane as a helical segment. Residues 253 to 379 (LGMSCVYIII…IISATLWVIR (127 aa)) enclose the EamA 2 domain. Topologically, residues 263–269 (RYIGKRA) are lumenal. Residues 270–290 (HAIMSVSYFSLITAIVSFIGI) traverse the membrane as a helical segment. The Cytoplasmic portion of the chain corresponds to 291 to 307 (NTIPSMKFQIPHSKKQW). The chain crosses the membrane as a helical span at residues 308–328 (ILFGNLGVSGFIFQLLLTMGI). Over 329-357 (QRERAGRGSLMTYTQLLYAVFWDVALYKH) the chain is Lumenal. Residues 358-378 (WPNIWSWIGMIIIISATLWVI) traverse the membrane as a helical segment. Over 379–414 (RIRAANNETTAKDLTPIIDDEENSIPLTEFDLSDSK) the chain is Cytoplasmic.

The protein to yeast YPL264c.

It localises to the membrane. This is an uncharacterized protein from Saccharomyces cerevisiae (strain ATCC 204508 / S288c) (Baker's yeast).